Here is an 86-residue protein sequence, read N- to C-terminus: Probable weak neurotoxin NNAM2I (86 aa).

The first 21 residues, 1 to 21 (MKTLPLTLVVVTIVCLDLGYT), serve as a signal peptide directing secretion. 5 cysteine pairs are disulfide-bonded: Cys-24/Cys-45, Cys-27/Cys-32, Cys-38/Cys-63, Cys-67/Cys-78, and Cys-79/Cys-84.

The protein belongs to the three-finger toxin family. Ancestral subfamily. Orphan group II sub-subfamily. In terms of tissue distribution, expressed by the venom gland.

It is found in the secreted. Binds with low affinity to muscular (alpha-1-beta-1-delta-epsilon/CHRNA1-CHRNB1-CHRND-CHRNE) and very low affinity to neuronal (alpha-7/CHRNA7) nicotinic acetylcholine receptor (nAChR). In Naja atra (Chinese cobra), this protein is Probable weak neurotoxin NNAM2I.